The sequence spans 159 residues: Large ribosomal subunit protein uL11 (159 aa).

The protein belongs to the universal ribosomal protein uL11 family. Part of the ribosomal stalk of the 50S ribosomal subunit. Interacts with L10 and the large rRNA to form the base of the stalk. L10 forms an elongated spine to which L12 dimers bind in a sequential fashion forming a multimeric L10(L12)X complex.

Its function is as follows. Forms part of the ribosomal stalk which helps the ribosome interact with GTP-bound translation factors. This is Large ribosomal subunit protein uL11 from Methanococcus maripaludis (strain C5 / ATCC BAA-1333).